We begin with the raw amino-acid sequence, 222 residues long: Probable septum site-determining protein MinC (222 aa).

The protein belongs to the MinC family. Interacts with MinD and FtsZ.

Functionally, cell division inhibitor that blocks the formation of polar Z ring septums. Rapidly oscillates between the poles of the cell to destabilize FtsZ filaments that have formed before they mature into polar Z rings. Prevents FtsZ polymerization. The chain is Probable septum site-determining protein MinC from Lysinibacillus sphaericus (strain C3-41).